Consider the following 362-residue polypeptide: 3-dehydroquinate synthase (362 aa).

Residues 95 to 99, 119 to 120, K132, and K141 contribute to the NAD(+) site; these read GVVGD and TT. Zn(2+)-binding residues include E174, H238, and H255.

Belongs to the sugar phosphate cyclases superfamily. Dehydroquinate synthase family. Requires Co(2+) as cofactor. It depends on Zn(2+) as a cofactor. The cofactor is NAD(+).

The protein localises to the cytoplasm. It carries out the reaction 7-phospho-2-dehydro-3-deoxy-D-arabino-heptonate = 3-dehydroquinate + phosphate. The protein operates within metabolic intermediate biosynthesis; chorismate biosynthesis; chorismate from D-erythrose 4-phosphate and phosphoenolpyruvate: step 2/7. Its function is as follows. Catalyzes the conversion of 3-deoxy-D-arabino-heptulosonate 7-phosphate (DAHP) to dehydroquinate (DHQ). This chain is 3-dehydroquinate synthase, found in Chlorobium luteolum (strain DSM 273 / BCRC 81028 / 2530) (Pelodictyon luteolum).